A 96-amino-acid polypeptide reads, in one-letter code: Co-chaperonin GroES (96 aa).

The protein belongs to the GroES chaperonin family. In terms of assembly, heptamer of 7 subunits arranged in a ring. Interacts with the chaperonin GroEL.

The protein localises to the cytoplasm. Its function is as follows. Together with the chaperonin GroEL, plays an essential role in assisting protein folding. The GroEL-GroES system forms a nano-cage that allows encapsulation of the non-native substrate proteins and provides a physical environment optimized to promote and accelerate protein folding. GroES binds to the apical surface of the GroEL ring, thereby capping the opening of the GroEL channel. The protein is Co-chaperonin GroES of Shewanella pealeana (strain ATCC 700345 / ANG-SQ1).